The chain runs to 284 residues: Bifunctional protein FolD (284 aa).

NADP(+) is bound by residues 165–167, Ser-190, and Ile-231; that span reads GRS.

The protein belongs to the tetrahydrofolate dehydrogenase/cyclohydrolase family. Homodimer.

The catalysed reaction is (6R)-5,10-methylene-5,6,7,8-tetrahydrofolate + NADP(+) = (6R)-5,10-methenyltetrahydrofolate + NADPH. The enzyme catalyses (6R)-5,10-methenyltetrahydrofolate + H2O = (6R)-10-formyltetrahydrofolate + H(+). The protein operates within one-carbon metabolism; tetrahydrofolate interconversion. Catalyzes the oxidation of 5,10-methylenetetrahydrofolate to 5,10-methenyltetrahydrofolate and then the hydrolysis of 5,10-methenyltetrahydrofolate to 10-formyltetrahydrofolate. This Streptococcus thermophilus (strain CNRZ 1066) protein is Bifunctional protein FolD.